A 469-amino-acid chain; its full sequence is Glutamine synthetase (469 aa).

Residues 13-97 (HEVKFVDLRF…IRCDILEPGT (85 aa)) enclose the GS beta-grasp domain. Positions 105-469 (PRSIAKRAED…PVEFELYYSV (365 aa)) constitute a GS catalytic domain. Positions 130 and 132 each coordinate Mg(2+). Glutamate 208 lines the ATP pocket. Residues glutamate 213 and glutamate 221 each coordinate Mg(2+). Residues 265–266 (NG) and glycine 266 each bind L-glutamate. A Mg(2+)-binding site is contributed by histidine 270. Residues 272–274 (HMS) and serine 274 contribute to the ATP site. 3 residues coordinate L-glutamate: arginine 322, glutamate 328, and arginine 340. Residues arginine 340, arginine 345, and lysine 353 each coordinate ATP. Glutamate 358 contacts Mg(2+). Residue arginine 360 participates in L-glutamate binding. Tyrosine 398 is modified (O-AMP-tyrosine).

It belongs to the glutamine synthetase family. In terms of assembly, oligomer of 12 subunits arranged in the form of two hexagons. The cofactor is Mn(2+).

Its subcellular location is the cytoplasm. The catalysed reaction is L-glutamate + NH4(+) + ATP = L-glutamine + ADP + phosphate + H(+). With respect to regulation, when cellular nitrogen levels are high, the C-terminal adenylyl transferase (AT) of GlnE inhibits GlnA by covalent transfer of an adenylyl group from ATP to Tyr-398. Conversely, when nitrogen levels are low, the N-terminal adenylyl removase (AR) of GlnE activates GlnA by removing the adenylyl group by phosphorolysis. The fully adenylated enzyme complex is inactive. Catalyzes the ATP-dependent biosynthesis of glutamine from glutamate and ammonia. This is Glutamine synthetase from Salmonella typhi.